The primary structure comprises 290 residues: Pirin (290 aa).

The Fe cation site is built by His-56, His-58, His-101, and Glu-103.

It belongs to the pirin family. In terms of assembly, may interact with NF1/CTF1. Interacts with BCL3. Identified in a complex comprised of PIR, BLC3, NFKB1 and target DNA. Fe cation is required as a cofactor. Weakly expressed in bone marrow.

It localises to the nucleus. It is found in the cytoplasm. The enzyme catalyses quercetin + O2 = 2-(3,4-dihydroxybenzoyloxy)-4,6-dihydroxybenzoate + CO. It participates in flavonoid metabolism; quercetin degradation. Its function is as follows. Transcriptional coregulator of NF-kappa-B which facilitates binding of NF-kappa-B proteins to target kappa-B genes in a redox-state-dependent manner. May be required for efficient terminal myeloid maturation of hematopoietic cells. Has quercetin 2,3-dioxygenase activity (in vitro). This is Pirin (Pir) from Mus musculus (Mouse).